Consider the following 232-residue polypeptide: Ubiquinone biosynthesis O-methyltransferase (232 aa).

4 residues coordinate S-adenosyl-L-methionine: Arg-36, Gly-55, Asp-76, and Leu-120.

It belongs to the methyltransferase superfamily. UbiG/COQ3 family.

The enzyme catalyses a 3-demethylubiquinol + S-adenosyl-L-methionine = a ubiquinol + S-adenosyl-L-homocysteine + H(+). It catalyses the reaction a 3-(all-trans-polyprenyl)benzene-1,2-diol + S-adenosyl-L-methionine = a 2-methoxy-6-(all-trans-polyprenyl)phenol + S-adenosyl-L-homocysteine + H(+). It participates in cofactor biosynthesis; ubiquinone biosynthesis. In terms of biological role, O-methyltransferase that catalyzes the 2 O-methylation steps in the ubiquinone biosynthetic pathway. This is Ubiquinone biosynthesis O-methyltransferase from Pseudomonas aeruginosa (strain ATCC 15692 / DSM 22644 / CIP 104116 / JCM 14847 / LMG 12228 / 1C / PRS 101 / PAO1).